Reading from the N-terminus, the 320-residue chain is Malate dehydrogenase 2 (320 aa).

Residues 10–15 (GAGQIG) and aspartate 34 contribute to the NAD(+) site. Substrate contacts are provided by arginine 83 and arginine 89. Residues asparagine 96 and 119 to 121 (ITN) contribute to the NAD(+) site. Residues asparagine 121 and arginine 152 each coordinate substrate. Catalysis depends on histidine 176, which acts as the Proton acceptor.

The protein belongs to the LDH/MDH superfamily. MDH type 3 family.

It catalyses the reaction (S)-malate + NAD(+) = oxaloacetate + NADH + H(+). Its function is as follows. Catalyzes the reversible oxidation of malate to oxaloacetate. This is Malate dehydrogenase 2 from Rhodopseudomonas palustris (strain BisB18).